The chain runs to 92 residues: Small ribosomal subunit protein uS19 (92 aa).

Belongs to the universal ribosomal protein uS19 family.

Its function is as follows. Protein S19 forms a complex with S13 that binds strongly to the 16S ribosomal RNA. This chain is Small ribosomal subunit protein uS19, found in Corynebacterium aurimucosum (strain ATCC 700975 / DSM 44827 / CIP 107346 / CN-1) (Corynebacterium nigricans).